Reading from the N-terminus, the 384-residue chain is Tetraacyldisaccharide 4'-kinase (384 aa).

ATP is bound at residue 72-79; sequence TAGGTGKT.

The protein belongs to the LpxK family.

The enzyme catalyses a lipid A disaccharide + ATP = a lipid IVA + ADP + H(+). It functions in the pathway glycolipid biosynthesis; lipid IV(A) biosynthesis; lipid IV(A) from (3R)-3-hydroxytetradecanoyl-[acyl-carrier-protein] and UDP-N-acetyl-alpha-D-glucosamine: step 6/6. In terms of biological role, transfers the gamma-phosphate of ATP to the 4'-position of a tetraacyldisaccharide 1-phosphate intermediate (termed DS-1-P) to form tetraacyldisaccharide 1,4'-bis-phosphate (lipid IVA). The sequence is that of Tetraacyldisaccharide 4'-kinase from Halothermothrix orenii (strain H 168 / OCM 544 / DSM 9562).